The sequence spans 690 residues: Eukaryotic translation initiation factor 3 subunit B (690 aa).

The span at 1–11 (MAKKKSEDHSG) shows a compositional bias: basic and acidic residues. The interval 1–33 (MAKKKSEDHSGADANDSDYNEEPNFDDPPNFVD) is disordered. Residues 15–25 (NDSDYNEEPNF) show a composition bias toward acidic residues. The 85-residue stretch at 57–141 (SVVVVDNMPK…YTFAVNLFTD (85 aa)) folds into the RRM domain. 5 WD repeats span residues 207-246 (TRERFTDTFVKWSPLGTYVVTFHKPGVAIWGGSSFQKIQK), 292-331 (GDGMSVLSMFRWSHDDKYVARMGESSIHIYETPSFYLLDL), 334-369 (IKIPGIRGFSWSPTDNVIAYWVEEQNQIPARVTLMK), 442-484 (EIRE…KPSL), and 530-575 (PDHF…IKRT). The stretch at 613 to 646 (EQKDRLRLTRASKELLEKRAQLRETFMEYRNKRI) forms a coiled coil.

The protein belongs to the eIF-3 subunit B family. In terms of assembly, component of the eukaryotic translation initiation factor 3 (eIF-3) complex. The eIF-3 complex interacts with pix. Interacts with mxt.

It localises to the cytoplasm. Its function is as follows. RNA-binding component of the eukaryotic translation initiation factor 3 (eIF-3) complex, which is involved in protein synthesis of a specialized repertoire of mRNAs and, together with other initiation factors, stimulates binding of mRNA and methionyl-tRNAi to the 40S ribosome. The eIF-3 complex specifically targets and initiates translation of a subset of mRNAs involved in cell proliferation. The sequence is that of Eukaryotic translation initiation factor 3 subunit B from Drosophila grimshawi (Hawaiian fruit fly).